The following is a 133-amino-acid chain: MIYILLYMVLLLLLLLLLLLLLLLLLLLQLYYFVFDSYTFSHITCSFSILFLVSFSIGTFFSSIGARLSSFSASMRPTRAISLPRSNCALQMNSLLMRLKTLVMNRLVFLSKPFRLAMRHSPSTLIITTLLFK.

2 helical membrane-spanning segments follow: residues 8-28 (MVLLLLLLLLLLLLLLLLLLL) and 46-66 (SFSILFLVSFSIGTFFSSIGA).

The protein localises to the membrane. This is an uncharacterized protein from Saccharomyces cerevisiae (strain ATCC 204508 / S288c) (Baker's yeast).